A 397-amino-acid polypeptide reads, in one-letter code: Iripin-2 (397 aa).

Positions 1–21 (MEDFKMKTLAAFLSLLVLCWA) are cleaved as a signal peptide. Residues Asn109 and Asn270 are each glycosylated (N-linked (GlcNAc...) asparagine).

Belongs to the serpin family. Interacts with mouse MCPT4. In terms of tissue distribution, female salivary gland. Ovary. Midgut.

The protein resides in the secreted. Its function is as follows. Serine protease inhibitor that modulates blood feeding of ticks on vertebrate species. Inhibits host trypsin, thrombin (F2), alpha-chymotrypsin, cathepsin G (CTSG) and mast cell chymase (CMA1). Inhibits host cathepsin G- and thrombin-induced platelet aggregation. Inhibits acute inflammation in the host. Suppresses neutrophil recruitment in inflamed area. Does not inhibit host plasmin (PLG), factor Xa (F10), factor XIa (F11), elastase and proteinase 3/myeloblastin (PRTN3). Functionally, (Microbial infection) Inhibits IL6 production by mouse splenic dendritic cells in response to Borrelia burgdorferi exposure. Decreases levels of STAT3 phosphorylation in mouse splenic dendritic cells in response to Borrelia burgdorferi exposure and in Borrelia-primed CD4+ T-lymphocytes. Inhibits differentiation of mouse Th17 cells, a subset of CD4+ T-lymphocytes that play a crucial role in protection against extracellular bacteria, in response to Borrelia burgdorferi exposure via inhibition of the IL6/STAT3 signaling pathway. This Ixodes ricinus (Common tick) protein is Iripin-2.